The following is a 138-amino-acid chain: Holo-[acyl-carrier-protein] synthase (138 aa).

Mg(2+)-binding residues include aspartate 8 and glutamate 56.

Belongs to the P-Pant transferase superfamily. AcpS family. It depends on Mg(2+) as a cofactor.

Its subcellular location is the cytoplasm. The catalysed reaction is apo-[ACP] + CoA = holo-[ACP] + adenosine 3',5'-bisphosphate + H(+). Its function is as follows. Transfers the 4'-phosphopantetheine moiety from coenzyme A to a Ser of acyl-carrier-protein. The protein is Holo-[acyl-carrier-protein] synthase of Thermoanaerobacter pseudethanolicus (strain ATCC 33223 / 39E) (Clostridium thermohydrosulfuricum).